The following is a 390-amino-acid chain: 3,5-dihydroxybiphenyl synthase (390 aa).

Cys161 is an active-site residue.

This sequence belongs to the thiolase-like superfamily. Chalcone/stilbene synthases family. Homodimer.

The enzyme catalyses benzoyl-CoA + 3 malonyl-CoA + 3 H(+) = biphenyl-3,5-diol + 4 CO2 + 4 CoA. Type III polyketide synthase involved in the biosynthesis of the phytoalexins bisphenyls and dibenzofurans. Can also use salicoyl-CoA and malonyl-CoA to produce a diketide intermediate yielding 4-hydroxycoumarin after cyclization and enolization. Can also use m-hydroxybenzoyl-CoA as substrate, producing m-hydroxybenzoyl diacetic acid lactone as a derailment product. No activity with p-hydroxybenzoyl-CoA, CoA-linked cinnamic acids or acetyl-CoA. The sequence is that of 3,5-dihydroxybiphenyl synthase (BIS1) from Sorbus aucuparia (European mountain ash).